The chain runs to 348 residues: 4-hydroxy-2-oxovalerate aldolase 3 (348 aa).

The Pyruvate carboxyltransferase domain maps to 8–260 (ITVHDMTLRD…ETGVDVWKIQ (253 aa)). 16-17 (RD) contacts substrate. Asp17 is a binding site for Mn(2+). His20 (proton acceptor) is an active-site residue. The substrate site is built by Ser170 and His199. 2 residues coordinate Mn(2+): His199 and His201. A substrate-binding site is contributed by Tyr290.

Belongs to the 4-hydroxy-2-oxovalerate aldolase family.

The catalysed reaction is (S)-4-hydroxy-2-oxopentanoate = acetaldehyde + pyruvate. This chain is 4-hydroxy-2-oxovalerate aldolase 3, found in Burkholderia lata (strain ATCC 17760 / DSM 23089 / LMG 22485 / NCIMB 9086 / R18194 / 383).